Consider the following 359-residue polypeptide: tRNA N6-adenosine threonylcarbamoyltransferase (359 aa).

Residues H115 and H119 each contribute to the Fe cation site. Substrate contacts are provided by residues 137–141 (LVSGG), D170, G183, and N283. Fe cation is bound at residue D311. Residues 328 to 359 (APDSLDIAPRSRWPLDEKSAPVFGTGRRGAKA) form a disordered region.

The protein belongs to the KAE1 / TsaD family. Requires Fe(2+) as cofactor.

It localises to the cytoplasm. It carries out the reaction L-threonylcarbamoyladenylate + adenosine(37) in tRNA = N(6)-L-threonylcarbamoyladenosine(37) in tRNA + AMP + H(+). Its function is as follows. Required for the formation of a threonylcarbamoyl group on adenosine at position 37 (t(6)A37) in tRNAs that read codons beginning with adenine. Is involved in the transfer of the threonylcarbamoyl moiety of threonylcarbamoyl-AMP (TC-AMP) to the N6 group of A37, together with TsaE and TsaB. TsaD likely plays a direct catalytic role in this reaction. This chain is tRNA N6-adenosine threonylcarbamoyltransferase, found in Brucella ovis (strain ATCC 25840 / 63/290 / NCTC 10512).